Reading from the N-terminus, the 121-residue chain is Large ribosomal subunit protein uL22 (121 aa).

The protein belongs to the universal ribosomal protein uL22 family. As to quaternary structure, part of the 50S ribosomal subunit.

This protein binds specifically to 23S rRNA; its binding is stimulated by other ribosomal proteins, e.g. L4, L17, and L20. It is important during the early stages of 50S assembly. It makes multiple contacts with different domains of the 23S rRNA in the assembled 50S subunit and ribosome. Its function is as follows. The globular domain of the protein is located near the polypeptide exit tunnel on the outside of the subunit, while an extended beta-hairpin is found that lines the wall of the exit tunnel in the center of the 70S ribosome. The sequence is that of Large ribosomal subunit protein uL22 from Arthrobacter sp. (strain FB24).